The primary structure comprises 327 residues: Phenylalanine--tRNA ligase alpha subunit (327 aa).

Glutamate 252 provides a ligand contact to Mg(2+).

The protein belongs to the class-II aminoacyl-tRNA synthetase family. Phe-tRNA synthetase alpha subunit type 1 subfamily. As to quaternary structure, tetramer of two alpha and two beta subunits. Requires Mg(2+) as cofactor.

Its subcellular location is the cytoplasm. It carries out the reaction tRNA(Phe) + L-phenylalanine + ATP = L-phenylalanyl-tRNA(Phe) + AMP + diphosphate + H(+). The chain is Phenylalanine--tRNA ligase alpha subunit from Salmonella agona (strain SL483).